The following is a 198-amino-acid chain: Inosine triphosphate pyrophosphatase (198 aa).

A2 is subject to N-acetylalanine. 14–19 (TGNAKK) contributes to the ITP binding site. E44 contacts Mg(2+). ITP contacts are provided by residues K56, 72–73 (DT), and K89. Phosphoserine is present on S146. ITP is bound by residues 149–152 (FGWD), K172, and 177–178 (HR).

This sequence belongs to the HAM1 NTPase family. In terms of assembly, homodimer. It depends on Mg(2+) as a cofactor. The cofactor is Mn(2+).

Its subcellular location is the cytoplasm. It catalyses the reaction ITP + H2O = IMP + diphosphate + H(+). It carries out the reaction dITP + H2O = dIMP + diphosphate + H(+). The catalysed reaction is XTP + H2O = XMP + diphosphate + H(+). The enzyme catalyses N(6)-hydroxy-dATP + H2O = N(6)-hydroxy-dAMP + diphosphate + H(+). Pyrophosphatase that hydrolyzes the non-canonical purine nucleotides inosine triphosphate (ITP), deoxyinosine triphosphate (dITP) as well as 2'-deoxy-N-6-hydroxylaminopurine triphosphate (dHAPTP) and xanthosine 5'-triphosphate (XTP) to their respective monophosphate derivatives. The enzyme does not distinguish between the deoxy- and ribose forms. Probably excludes non-canonical purines from RNA and DNA precursor pools, thus preventing their incorporation into RNA and DNA and avoiding chromosomal lesions. This chain is Inosine triphosphate pyrophosphatase (Itpa), found in Rattus norvegicus (Rat).